We begin with the raw amino-acid sequence, 65 residues long: Large ribosomal subunit protein uL29 (65 aa).

The protein belongs to the universal ribosomal protein uL29 family.

This chain is Large ribosomal subunit protein uL29, found in Buchnera aphidicola subsp. Schizaphis graminum (strain Sg).